Here is a 108-residue protein sequence, read N- to C-terminus: Cytochrome c (108 aa).

Heme c-binding residues include Cys19, Cys22, His23, and Met85.

The protein belongs to the cytochrome c family. In terms of processing, binds 1 heme c group covalently per subunit.

It localises to the mitochondrion intermembrane space. Electron carrier protein. The oxidized form of the cytochrome c heme group can accept an electron from the heme group of the cytochrome c1 subunit of cytochrome reductase. Cytochrome c then transfers this electron to the cytochrome oxidase complex, the final protein carrier in the mitochondrial electron-transport chain. This Cochliobolus lunatus (Filamentous fungus) protein is Cytochrome c.